The sequence spans 1199 residues: AP-3 complex subunit delta-1 (1199 aa).

A2 is subject to N-acetylalanine. 9 HEAT repeats span residues 34–71 (KYISQCIDEIKQELKQDNIAVKANAVCKLTYLQMLGYD), 142–179 (DLARDLANDIMTLMSHTKPYIRKKAVLIMYKVFLKYPE), 180–216 (SLRPAFPRLKEKLEDPDPGVQSAAVNVICELARRNPK), 218–254 (YLSLAPLFFKLMTSSTNNWVLIKIIKLFGALTPLEPR), 257–296 (KKLIEPLTNLIHSTSAMSLLYECVNTVIAVLISLSSGMPN), 298–336 (SASIQLCVQKLRILIEDSDQNLKYLGLLAMSKILKTHPK), 337–373 (SVQSHKDLILQCLDDKDESIRLRALDLLYGMVSKKNL), 375–409 (EIVKKLMTHVDKAEGTTYRDELLTKIIDICSQSNY), and 521–558 (VYVQNVVKLYASILQQKEQAADTEAAQEVTQLLVERLP). Disordered stretches follow at residues 623–695 (LDAW…RYQD) and 724–963 (YVKL…EPIP). 3 positions are modified to phosphoserine: S632, S634, and S636. Basic and acidic residues-rich tracts occupy residues 639–651 (EKPKAIFHEEEPR) and 665–675 (LARRREARKQE). Residues 659 to 679 (EEDEEELARRREARKQEQANN) adopt a coiled-coil conformation. Residue S688 is modified to Phosphoserine. A coiled-coil region spans residues 722 to 750 (DQYVKLEEQRRHRQRLEKDKKRKKKEKGK). Basic residues predominate over residues 732 to 754 (RHRQRLEKDKKRKKKEKGKRRHS). 2 positions are modified to phosphoserine: S754 and S755. T758 is subject to Phosphothreonine. Phosphoserine is present on residues S760, S784, and S825. Over residues 773 to 790 (ITEEMPENALPSDEDDKD) the composition is skewed to acidic residues. Positions 791-836 (PNDPYRALDIDLDKPLADSEKLPVQKHRNAEAVKSPEKEGVLGVEK) are enriched in basic and acidic residues. Residues 837–846 (KSKKPKKKEK) show a composition bias toward basic residues. A coiled-coil region spans residues 843–863 (KKEKKTKEREREKKDKKGEDL). Residues 847–862 (KTKEREREKKDKKGED) are compositionally biased toward basic and acidic residues. Over residues 870–880 (TPPPAAAPIPA) the composition is skewed to pro residues. A compositionally biased stretch (basic and acidic residues) spans 894–916 (PKDECEVLKGEEEDHVDHDQERK). Residues 911–934 (HDQERKSSRHKKKKHRKEKEKEER) adopt a coiled-coil conformation. A compositionally biased stretch (basic residues) spans 917–928 (SSRHKKKKHRKE).

The protein belongs to the adaptor complexes large subunit family. As to quaternary structure, adaptor protein complex 3 (AP-3) is a heterotetramer composed of two large adaptins (delta-type subunit AP3D1 and beta-type subunit AP3B1 or AP3B2), a medium adaptin (mu-type subunit AP3M1 or AP3M2) and a small adaptin (sigma-type subunit APS1 or AP3S2). AP-3 associates with the BLOC-1 complex. Interacts with SLC30A2. Interacts with CLN3 (via dileucine motif); this interaction facilitates lysosomal targeting.

It localises to the cytoplasm. The protein localises to the golgi apparatus membrane. Its function is as follows. Part of the AP-3 complex, an adaptor-related complex which is not clathrin-associated. The complex is associated with the Golgi region as well as more peripheral structures. It facilitates the budding of vesicles from the Golgi membrane and may be directly involved in trafficking to lysosomes. Involved in process of CD8+ T-cell and NK cell degranulation. In concert with the BLOC-1 complex, AP-3 is required to target cargos into vesicles assembled at cell bodies for delivery into neurites and nerve terminals. The protein is AP-3 complex subunit delta-1 (Ap3d1) of Mus musculus (Mouse).